The following is a 135-amino-acid chain: ATP synthase epsilon chain (135 aa).

The protein belongs to the ATPase epsilon chain family. As to quaternary structure, F-type ATPases have 2 components, CF(1) - the catalytic core - and CF(0) - the membrane proton channel. CF(1) has five subunits: alpha(3), beta(3), gamma(1), delta(1), epsilon(1). CF(0) has three main subunits: a, b and c.

The protein localises to the cell inner membrane. Functionally, produces ATP from ADP in the presence of a proton gradient across the membrane. The polypeptide is ATP synthase epsilon chain (Rhodopseudomonas palustris (strain ATCC BAA-98 / CGA009)).